Reading from the N-terminus, the 916-residue chain is Protein translocase subunit SecA (916 aa).

Residues Gln-87, 105–109 (GEGKT), and Asp-507 contribute to the ATP site. Zn(2+) contacts are provided by Cys-900, Cys-902, Cys-911, and His-912.

The protein belongs to the SecA family. As to quaternary structure, monomer and homodimer. Part of the essential Sec protein translocation apparatus which comprises SecA, SecYEG and auxiliary proteins SecDF-YajC and YidC. Requires Zn(2+) as cofactor.

It localises to the cell inner membrane. It is found in the cytoplasm. It carries out the reaction ATP + H2O + cellular proteinSide 1 = ADP + phosphate + cellular proteinSide 2.. Its function is as follows. Part of the Sec protein translocase complex. Interacts with the SecYEG preprotein conducting channel. Has a central role in coupling the hydrolysis of ATP to the transfer of proteins into and across the cell membrane, serving both as a receptor for the preprotein-SecB complex and as an ATP-driven molecular motor driving the stepwise translocation of polypeptide chains across the membrane. This Neisseria meningitidis serogroup B (strain ATCC BAA-335 / MC58) protein is Protein translocase subunit SecA.